A 155-amino-acid polypeptide reads, in one-letter code: SsrA-binding protein (155 aa).

Belongs to the SmpB family.

It localises to the cytoplasm. Required for rescue of stalled ribosomes mediated by trans-translation. Binds to transfer-messenger RNA (tmRNA), required for stable association of tmRNA with ribosomes. tmRNA and SmpB together mimic tRNA shape, replacing the anticodon stem-loop with SmpB. tmRNA is encoded by the ssrA gene; the 2 termini fold to resemble tRNA(Ala) and it encodes a 'tag peptide', a short internal open reading frame. During trans-translation Ala-aminoacylated tmRNA acts like a tRNA, entering the A-site of stalled ribosomes, displacing the stalled mRNA. The ribosome then switches to translate the ORF on the tmRNA; the nascent peptide is terminated with the 'tag peptide' encoded by the tmRNA and targeted for degradation. The ribosome is freed to recommence translation, which seems to be the essential function of trans-translation. This Alkaliphilus oremlandii (strain OhILAs) (Clostridium oremlandii (strain OhILAs)) protein is SsrA-binding protein.